The following is a 352-amino-acid chain: Sulfate-binding protein (352 aa).

Positions 1–40 (MARSAFGWGFSVIAVLMVGSITACNTTTTTEPGQGENASQ) are cleaved as a signal peptide.

The protein belongs to the prokaryotic sulfate-binding protein family.

It is found in the periplasm. Its function is as follows. This protein specifically binds sulfate and is involved in its transmembrane transport. In Synechocystis sp. (strain ATCC 27184 / PCC 6803 / Kazusa), this protein is Sulfate-binding protein (sbpA).